The chain runs to 242 residues: Ubiquinone biosynthesis O-methyltransferase (242 aa).

Positions 44, 64, 85, and 129 each coordinate S-adenosyl-L-methionine.

This sequence belongs to the methyltransferase superfamily. UbiG/COQ3 family.

It catalyses the reaction a 3-demethylubiquinol + S-adenosyl-L-methionine = a ubiquinol + S-adenosyl-L-homocysteine + H(+). It carries out the reaction a 3-(all-trans-polyprenyl)benzene-1,2-diol + S-adenosyl-L-methionine = a 2-methoxy-6-(all-trans-polyprenyl)phenol + S-adenosyl-L-homocysteine + H(+). It functions in the pathway cofactor biosynthesis; ubiquinone biosynthesis. Functionally, O-methyltransferase that catalyzes the 2 O-methylation steps in the ubiquinone biosynthetic pathway. The protein is Ubiquinone biosynthesis O-methyltransferase of Salmonella paratyphi A (strain ATCC 9150 / SARB42).